A 588-amino-acid chain; its full sequence is Arylsulfatase L (588 aa).

Positions 1 to 31 (MLHLHHSWLCFRSWLAGMLSVLLGLVPSASS) are cleaved as a signal peptide. N32 is a glycosylation site (N-linked (GlcNAc...) asparagine). Residues D46 and D47 each contribute to the Ca(2+) site. The N-linked (GlcNAc...) asparagine glycan is linked to N58. C86 serves as a coordination point for Ca(2+). C86 functions as the Nucleophile in the catalytic mechanism. C86 bears the 3-oxoalanine (Cys) mark. N125 carries N-linked (GlcNAc...) asparagine glycosylation. Position 145 (K145) interacts with substrate. H147 is a catalytic residue. Residue N258 is glycosylated (N-linked (GlcNAc...) asparagine). Residue H301 participates in substrate binding. N344 is a glycosylation site (N-linked (GlcNAc...) asparagine). Residues D353 and H354 each coordinate Ca(2+). Substrate is bound at residue K378.

Belongs to the sulfatase family. Ca(2+) is required as a cofactor. In terms of processing, the conversion to 3-oxoalanine (also known as C-formylglycine, FGly), of a serine or cysteine residue in prokaryotes and of a cysteine residue in eukaryotes, is critical for catalytic activity.

The protein localises to the golgi apparatus. It localises to the golgi stack. The catalysed reaction is an aryl sulfate + H2O = a phenol + sulfate + H(+). In terms of biological role, exhibits arylsulfatase activity towards the artificial substrate 4-methylumbelliferyl sulfate. May be essential for the correct composition of cartilage and bone matrix during development. Has no activity toward steroid sulfates. The polypeptide is Arylsulfatase L (ARSL) (Macaca fascicularis (Crab-eating macaque)).